Here is a 317-residue protein sequence, read N- to C-terminus: Putative GTPase PH0274 (317 aa).

Residues 54–62 (GPPGAGKST), D196, and 231–233 (VGT) contribute to the GTP site.

The protein belongs to the SIMIBI class G3E GTPase family. ArgK/MeaB subfamily.

Functionally, may have GTPase activity. May also bind and hydrolyze ATP. May function as chaperone. This Pyrococcus horikoshii (strain ATCC 700860 / DSM 12428 / JCM 9974 / NBRC 100139 / OT-3) protein is Putative GTPase PH0274.